The sequence spans 705 residues: Protein arginine N-methyltransferase 7 (705 aa).

2 consecutive SAM-dependent MTase PRMT-type domains span residues 29–372 (QNSW…YSLW) and 381–705 (TKSV…QKKL).

Belongs to the class I-like SAM-binding methyltransferase superfamily. Protein arginine N-methyltransferase family. PRMT7 subfamily.

Essential arginine methyltransferase that can both catalyze the formation of omega-N monomethylarginine (MMA) and symmetrical dimethylarginine (sDMA). Specifically mediates the symmetrical dimethylation of arginine residues in the small nuclear ribonucleoproteins SmD1 and SmD3. The chain is Protein arginine N-methyltransferase 7 (Art7) from Drosophila simulans (Fruit fly).